We begin with the raw amino-acid sequence, 727 residues long: Polyribonucleotide nucleotidyltransferase (727 aa).

Mg(2+)-binding residues include D488 and D494. A KH domain is found at 555–614 (PKLYTMKINPEKIRDVIGKGGATIRALTDETGCQINIEEDGTITIAATEAAKADEAKRRI). Positions 624–692 (GKVYEGPVTK…DKGRVKLSMK (69 aa)) constitute an S1 motif domain. The segment at 691–727 (MKALADRPAGDSGRPAPAERGERRERRDGGASEQQQQ) is disordered. Residues 707–720 (PAERGERRERRDGG) are compositionally biased toward basic and acidic residues.

The protein belongs to the polyribonucleotide nucleotidyltransferase family. The cofactor is Mg(2+).

It is found in the cytoplasm. It catalyses the reaction RNA(n+1) + phosphate = RNA(n) + a ribonucleoside 5'-diphosphate. Involved in mRNA degradation. Catalyzes the phosphorolysis of single-stranded polyribonucleotides processively in the 3'- to 5'-direction. This Acidovorax ebreus (strain TPSY) (Diaphorobacter sp. (strain TPSY)) protein is Polyribonucleotide nucleotidyltransferase.